The sequence spans 226 residues: Elongation factor 1-delta 2 (226 aa).

The tract at residues 82–131 (TACSVSPTADQKAPAADEEDDDDVDLFGEETEEEKKAAEERAAAVKASGK) is disordered. The span at 97–113 (ADEEDDDDVDLFGEETE) shows a compositional bias: acidic residues. Residues 114-124 (EEKKAAEERAA) show a composition bias toward basic and acidic residues.

It belongs to the EF-1-beta/EF-1-delta family. As to quaternary structure, EF-1 is composed of 4 subunits: alpha, beta (1B-alpha=beta'), delta (1B-beta), and gamma (1B-gamma).

Functionally, EF-1-beta and EF-1-beta' stimulate the exchange of GDP bound to EF-1-alpha to GTP. This chain is Elongation factor 1-delta 2, found in Oryza sativa subsp. japonica (Rice).